The primary structure comprises 131 residues: Small ribosomal subunit protein eS17 (131 aa).

Belongs to the eukaryotic ribosomal protein eS17 family.

This chain is Small ribosomal subunit protein eS17 (RPS17), found in Theileria annulata.